Consider the following 66-residue polypeptide: MSKLKTRSSAAKRFKVTATGKILHKKAGKRHNLSKKSKARKRRLDIPGEIKSVDRWKVERMLPYNL.

A compositionally biased stretch (basic residues) spans 24–43; it reads HKKAGKRHNLSKKSKARKRR. A disordered region spans residues 24–44; sequence HKKAGKRHNLSKKSKARKRRL.

This sequence belongs to the bacterial ribosomal protein bL35 family.

The chain is Large ribosomal subunit protein bL35 from Dictyoglomus thermophilum (strain ATCC 35947 / DSM 3960 / H-6-12).